Reading from the N-terminus, the 349-residue chain is Phosphate carrier protein, mitochondrial (349 aa).

3 Solcar repeats span residues 47 to 131 (KYFA…FKVQ), 144 to 229 (YRTF…TVEL), and 246 to 324 (EQLV…VKVW). Helical transmembrane passes span 48–68 (YFALCGLGGILSCGITHTAVV), 108–128 (APTFIGYSLQGLCKFGLYEVF), 147–167 (FVYLAASASAEFFADIALSPL), 207–227 (PLWGRQIPYTMMKFACFEKTV), 248–268 (LVVTFAAGYIAGVFCAIVSHP), and 304–324 (IIMIGTLTALQWFIYDAVKVW).

The protein belongs to the mitochondrial carrier (TC 2.A.29) family.

It is found in the mitochondrion inner membrane. In terms of biological role, transport of phosphate groups from the cytosol to the mitochondrial matrix. The polypeptide is Phosphate carrier protein, mitochondrial (Choristoneura fumiferana (Spruce budworm moth)).